A 114-amino-acid polypeptide reads, in one-letter code: T cell receptor beta variable 5-1 (114 aa).

A signal peptide spans M1–A21. The Ig-like domain maps to G22–L114. A disulfide bridge links C42 with C110. N96 carries N-linked (GlcNAc...) asparagine glycosylation.

Alpha-beta TR is a heterodimer composed of an alpha and beta chain; disulfide-linked. The alpha-beta TR is associated with the transmembrane signaling CD3 coreceptor proteins to form the TR-CD3 (TcR or TCR). The assembly of alpha-beta TR heterodimers with CD3 occurs in the endoplasmic reticulum where a single alpha-beta TR heterodimer associates with one CD3D-CD3E heterodimer, one CD3G-CD3E heterodimer and one CD247 homodimer forming a stable octameric structure. CD3D-CD3E and CD3G-CD3E heterodimers preferentially associate with TR alpha and TR beta chains, respectively. The association of the CD247 homodimer is the last step of TcR assembly in the endoplasmic reticulum and is required for transport to the cell surface.

The protein localises to the cell membrane. V region of the variable domain of T cell receptor (TR) beta chain that participates in the antigen recognition. Alpha-beta T cell receptors are antigen specific receptors which are essential to the immune response and are present on the cell surface of T lymphocytes. Recognize peptide-major histocompatibility (MH) (pMH) complexes that are displayed by antigen presenting cells (APC), a prerequisite for efficient T cell adaptive immunity against pathogens. Binding of alpha-beta TR to pMH complex initiates TR-CD3 clustering on the cell surface and intracellular activation of LCK that phosphorylates the ITAM motifs of CD3G, CD3D, CD3E and CD247 enabling the recruitment of ZAP70. In turn ZAP70 phosphorylates LAT, which recruits numerous signaling molecules to form the LAT signalosome. The LAT signalosome propagates signal branching to three major signaling pathways, the calcium, the mitogen-activated protein kinase (MAPK) kinase and the nuclear factor NF-kappa-B (NF-kB) pathways, leading to the mobilization of transcription factors that are critical for gene expression and essential for T cell growth and differentiation. The T cell repertoire is generated in the thymus, by V-(D)-J rearrangement. This repertoire is then shaped by intrathymic selection events to generate a peripheral T cell pool of self-MH restricted, non-autoaggressive T cells. Post-thymic interaction of alpha-beta TR with the pMH complexes shapes TR structural and functional avidity. The polypeptide is T cell receptor beta variable 5-1 (Homo sapiens (Human)).